A 675-amino-acid polypeptide reads, in one-letter code: MEVIRYPNSPFKLHQPFPPAGDQPTAIAGLLEGLSDGLAYQTLLGVTGSGKTYTMANVIAQSGRPAIIMAHNKTLAAQLYAEMREFFPENAVEYFVSYYDYYQPEAYVPSRDLFIEKDSAINEHIEQMRLSATKNLMTRDDVIIVATVSAIYGIGDPTEYQQMVLSVKEGDTIEQRDIIATLVSMQYERGDLDFKRGSFRVRGDVIDVYPAESSENALRISLFDDEIDRLDMFDPLSGSLHQRVGRYTVFPSSHYVTPRDTVLRACESIKEELRERIEFFAREQRPVEQQRIEQRTRFDLEMLYEMGFCKGIENYSRHFSGKKEGEPPPTLMDYLPDNAIMFIDESHVTVTQIGGMYKGDASRKQNLVDYGFRLPSARDNRPLKFHEFEKVMPQTVFVSATPAKYEEEHAGQVVEQVVRPTGLVDPQIIIRPVATQVDDLMSEINDRIQKGERVLVTTLTKRMAEQLTDYYSELGIKVRYLHSDIDTVERVEIIRDLRLGLFDVLVGINLLREGLDIPEVSLVAILDADKEGFLRSHRSLIQTIGRAARNVNGVAILYADKITDSMKAAVDETERRREKQIKFNEEHGIVPQQIKKQVKDIIDGVYHEEDSGKGRRQGKNKVKVGEIHNEEDAIKEIAKLEKAMQQAARDLQFEEAAVLRDRIRNIKENLLFGAE.

The Helicase ATP-binding domain occupies 32-417 (EGLSDGLAYQ…EHAGQVVEQV (386 aa)). Position 45-52 (45-52 (GVTGSGKT)) interacts with ATP. Residues 98-121 (YYDYYQPEAYVPSRDLFIEKDSAI) carry the Beta-hairpin motif. One can recognise a Helicase C-terminal domain in the interval 436-602 (QVDDLMSEIN…QIKKQVKDII (167 aa)). In terms of domain architecture, UVR spans 634 to 669 (IKEIAKLEKAMQQAARDLQFEEAAVLRDRIRNIKEN).

It belongs to the UvrB family. Forms a heterotetramer with UvrA during the search for lesions. Interacts with UvrC in an incision complex.

Its subcellular location is the cytoplasm. Functionally, the UvrABC repair system catalyzes the recognition and processing of DNA lesions. A damage recognition complex composed of 2 UvrA and 2 UvrB subunits scans DNA for abnormalities. Upon binding of the UvrA(2)B(2) complex to a putative damaged site, the DNA wraps around one UvrB monomer. DNA wrap is dependent on ATP binding by UvrB and probably causes local melting of the DNA helix, facilitating insertion of UvrB beta-hairpin between the DNA strands. Then UvrB probes one DNA strand for the presence of a lesion. If a lesion is found the UvrA subunits dissociate and the UvrB-DNA preincision complex is formed. This complex is subsequently bound by UvrC and the second UvrB is released. If no lesion is found, the DNA wraps around the other UvrB subunit that will check the other stand for damage. The protein is UvrABC system protein B of Neisseria gonorrhoeae.